Here is a 1292-residue protein sequence, read N- to C-terminus: Zinc finger CCCH domain-containing protein 44 (1292 aa).

Polar residues predominate over residues M1 to Q10. 2 disordered regions span residues M1–S24 and I72–D107. The PHD-type zinc finger occupies E110–S176. Disordered stretches follow at residues P256–A313 and K401–P426. An SWIB/MDM2 domain is found at A313–I396. The segment covering K404 to V414 has biased composition (polar residues). The Plus3 domain occupies A453–I586. 4 disordered regions span residues P624–P731, T777–P832, D876–S915, and T1170–R1245. The segment covering Q661–Q675 has biased composition (low complexity). Basic and acidic residues predominate over residues V689–K698. Residues V699 to E708 are compositionally biased toward polar residues. The GYF domain occupies S716 to A770. Low complexity predominate over residues V813–S829. Polar residues-rich tracts occupy residues G882–K899 and N906–S915. Low complexity-rich tracts occupy residues S1188 to G1206 and N1231 to N1244. A C3H1-type zinc finger spans residues P1267–P1292.

The chain is Zinc finger CCCH domain-containing protein 44 from Arabidopsis thaliana (Mouse-ear cress).